We begin with the raw amino-acid sequence, 827 residues long: Glycerol-3-phosphate acyltransferase (827 aa).

The HXXXXD motif signature appears at 325–330 (CHRSHM).

This sequence belongs to the GPAT/DAPAT family.

Its subcellular location is the cell inner membrane. It carries out the reaction sn-glycerol 3-phosphate + an acyl-CoA = a 1-acyl-sn-glycero-3-phosphate + CoA. Its pathway is phospholipid metabolism; CDP-diacylglycerol biosynthesis; CDP-diacylglycerol from sn-glycerol 3-phosphate: step 1/3. The polypeptide is Glycerol-3-phosphate acyltransferase (Shigella flexneri serotype 5b (strain 8401)).